The chain runs to 361 residues: Alanine racemase 2 (361 aa).

Residue Lys30 is the Proton acceptor; specific for D-alanine of the active site. An N6-(pyridoxal phosphate)lysine modification is found at Lys30. Position 122 (Arg122) interacts with substrate. Tyr256 acts as the Proton acceptor; specific for L-alanine in catalysis. Substrate is bound at residue Met303.

Belongs to the alanine racemase family. Pyridoxal 5'-phosphate is required as a cofactor.

It catalyses the reaction L-alanine = D-alanine. It functions in the pathway amino-acid biosynthesis; D-alanine biosynthesis; D-alanine from L-alanine: step 1/1. Functionally, catalyzes the interconversion of L-alanine and D-alanine. May also act on other amino acids. In Staphylococcus aureus (strain COL), this protein is Alanine racemase 2 (alr2).